Reading from the N-terminus, the 834-residue chain is Glycerol-3-phosphate acyltransferase (834 aa).

An HXXXXD motif motif is present at residues 309–314 (CHRSHI).

Belongs to the GPAT/DAPAT family.

Its subcellular location is the cell inner membrane. It carries out the reaction sn-glycerol 3-phosphate + an acyl-CoA = a 1-acyl-sn-glycero-3-phosphate + CoA. Its pathway is phospholipid metabolism; CDP-diacylglycerol biosynthesis; CDP-diacylglycerol from sn-glycerol 3-phosphate: step 1/3. The polypeptide is Glycerol-3-phosphate acyltransferase (Pseudomonas fluorescens (strain ATCC BAA-477 / NRRL B-23932 / Pf-5)).